Reading from the N-terminus, the 72-residue chain is Candidate secreted effector protein MPL124499 (72 aa).

The N-terminal stretch at 1 to 21 is a signal peptide; the sequence is MKLSIFAAIFMAFVSLNQVFG.

This sequence belongs to the CPGH1 family.

It is found in the secreted. The protein localises to the host cell. It localises to the host cytoplasm. Its subcellular location is the host nucleus. Its function is as follows. Rust effector delivered into infected tissues to modulate host functions and contribute to pathogen virulence. Enhances leaf colonization by the bacteria Pseudomonas syringae and the oomycete Hyaloperonospora arabidopsidis pathogens in an Arabidopsis thaliana infection model. The protein is Candidate secreted effector protein MPL124499 of Melampsora larici-populina (strain 98AG31 / pathotype 3-4-7) (Poplar leaf rust fungus).